Consider the following 226-residue polypeptide: Thiopurine S-methyltransferase (226 aa).

S-adenosyl-L-methionine contacts are provided by Trp16, Met51, Glu72, and Arg131.

The protein belongs to the class I-like SAM-binding methyltransferase superfamily. TPMT family.

It is found in the cytoplasm. It catalyses the reaction S-adenosyl-L-methionine + a thiopurine = S-adenosyl-L-homocysteine + a thiopurine S-methylether.. The protein is Thiopurine S-methyltransferase of Francisella tularensis subsp. tularensis (strain SCHU S4 / Schu 4).